We begin with the raw amino-acid sequence, 604 residues long: Threonine--tRNA ligase (604 aa).

Residues aspartate 210 to proline 501 are catalytic. Residues cysteine 302, histidine 353, and histidine 478 each coordinate Zn(2+).

It belongs to the class-II aminoacyl-tRNA synthetase family. In terms of assembly, homodimer. Zn(2+) is required as a cofactor.

It localises to the cytoplasm. It carries out the reaction tRNA(Thr) + L-threonine + ATP = L-threonyl-tRNA(Thr) + AMP + diphosphate + H(+). Catalyzes the attachment of threonine to tRNA(Thr) in a two-step reaction: L-threonine is first activated by ATP to form Thr-AMP and then transferred to the acceptor end of tRNA(Thr). Also edits incorrectly charged L-seryl-tRNA(Thr). The polypeptide is Threonine--tRNA ligase (Sulfurovum sp. (strain NBC37-1)).